The sequence spans 1141 residues: Membrane-associated protein gex-3 (1141 aa).

The protein belongs to the HEM-1/HEM-2 family. In terms of assembly, interacts with aco-1, gei-13 and gex-2. Interacts with gex-3. Expressed in neurons.

It is found in the cytoplasm. In terms of biological role, rac effector required for tissue morphogenesis, cell migrations and egg laying. May play a role in egg laying and in yolk protein clatherin-mediated endocytosis by oocytes during oogenesis. Plays a role in the formation of gap junctions between EA and EP endodermal precursor cells in embryos. The polypeptide is Membrane-associated protein gex-3 (Caenorhabditis elegans).